The following is a 292-amino-acid chain: NAD kinase (292 aa).

The Proton acceptor role is filled by aspartate 73. NAD(+) is bound by residues 73–74 (DG), 147–148 (NE), histidine 158, arginine 175, aspartate 177, 188–193 (TAYSLS), and glutamine 247.

Belongs to the NAD kinase family. It depends on a divalent metal cation as a cofactor.

The protein resides in the cytoplasm. The catalysed reaction is NAD(+) + ATP = ADP + NADP(+) + H(+). Its function is as follows. Involved in the regulation of the intracellular balance of NAD and NADP, and is a key enzyme in the biosynthesis of NADP. Catalyzes specifically the phosphorylation on 2'-hydroxyl of the adenosine moiety of NAD to yield NADP. This chain is NAD kinase, found in Pectobacterium atrosepticum (strain SCRI 1043 / ATCC BAA-672) (Erwinia carotovora subsp. atroseptica).